The following is a 59-amino-acid chain: UPF0434 protein Rsph17029_0141 (59 aa).

It belongs to the UPF0434 family.

The protein is UPF0434 protein Rsph17029_0141 of Cereibacter sphaeroides (strain ATCC 17029 / ATH 2.4.9) (Rhodobacter sphaeroides).